A 147-amino-acid polypeptide reads, in one-letter code: Nucleoside diphosphate kinase (147 aa).

Lys9, Phe57, Arg85, Thr91, Arg102, and Asn112 together coordinate ATP. The active-site Pros-phosphohistidine intermediate is the His115.

The protein belongs to the NDK family. Homotetramer. Mg(2+) is required as a cofactor.

The protein localises to the cytoplasm. The enzyme catalyses a 2'-deoxyribonucleoside 5'-diphosphate + ATP = a 2'-deoxyribonucleoside 5'-triphosphate + ADP. The catalysed reaction is a ribonucleoside 5'-diphosphate + ATP = a ribonucleoside 5'-triphosphate + ADP. In terms of biological role, major role in the synthesis of nucleoside triphosphates other than ATP. The ATP gamma phosphate is transferred to the NDP beta phosphate via a ping-pong mechanism, using a phosphorylated active-site intermediate. The chain is Nucleoside diphosphate kinase from Thermosipho africanus (strain TCF52B).